A 282-amino-acid chain; its full sequence is MTVIDGKALGVKLQAALAEKTARLKEEKGLVPGLVVILVGENPASQVYVRNKERSALAAGFKSEVVRVPDTISESDLLDLIERYNQDDEWHGILVQLPLPAHISEEKVLLAIDPDKDVDGLHPTNMGKFWSGHPVMIPSTPAGIMEMFKEYQIELEGKSALVIGRSNIVGKPMAQLLLDADATVTIAHSRTKNLPDLARQADIVVVAIGRGHFVTKEFVKLGAVVIDVGMNRDENGKLIGDVKYDEVSEVASYITPVPGGVGPMTITMLMEQTYEACVRSAK.

Residues 164–166 (GRS) and serine 189 contribute to the NADP(+) site.

The protein belongs to the tetrahydrofolate dehydrogenase/cyclohydrolase family. Homodimer.

The catalysed reaction is (6R)-5,10-methylene-5,6,7,8-tetrahydrofolate + NADP(+) = (6R)-5,10-methenyltetrahydrofolate + NADPH. It catalyses the reaction (6R)-5,10-methenyltetrahydrofolate + H2O = (6R)-10-formyltetrahydrofolate + H(+). Its pathway is one-carbon metabolism; tetrahydrofolate interconversion. Catalyzes the oxidation of 5,10-methylenetetrahydrofolate to 5,10-methenyltetrahydrofolate and then the hydrolysis of 5,10-methenyltetrahydrofolate to 10-formyltetrahydrofolate. The sequence is that of Bifunctional protein FolD from Streptococcus suis (strain 98HAH33).